Here is a 126-residue protein sequence, read N- to C-terminus: Fatty acid-binding protein, liver (126 aa).

An N-acetylalanine modification is found at Ala-2. Cholate is bound by residues Arg-56, Gln-57, Lys-77, His-99, and Gln-101.

It belongs to the calycin superfamily. Fatty-acid binding protein (FABP) family.

It is found in the cytoplasm. Binds free fatty acids and their coenzyme A derivatives, bilirubin, and some other small molecules in the cytoplasm. May be involved in intracellular lipid transport. Binds 2 molecules of cholate per subunit. The chain is Fatty acid-binding protein, liver (FABP1) from Gallus gallus (Chicken).